The sequence spans 1495 residues: MSEELALENLEHVETSVPHTVFSHANSAPRGKFRSLTLINWNGFFARTFDLDELVTTLSGGNGAGKSTTMAGFVTALIPDLTLLHFRNTTEAGATSGSRDKGLHGKLRPGVCYAALDTINSRNQRVIVGARLQQVAGRDKKVDIKTFSIQGLNLAENPTTIFTDVVNERQARVLTLNELKEKIEQAGAQFKQYHSITDYHAMMFDLGIIPKRLRSSSDRSKFYKLIEASLYGGISSAITRSLRDYLLPENLGVRKAFQDMESALRENRMTLEAIKVTQADRDLFKHLITETSNYVASDYMRHANERRGNIESAVRFRQDWYRARTEQHLSQQRLVELSREAAELAENEKTLEVDHQSAVDYLNLVLNALRHQEKIARYQDDVAEITARLEEQKMVVETATEQLEESQVQVEQVEQEVDQIRAQLADYQQALDAQQTRALQYQQAIAALEKAKTLCGLADLGVKNVEAYHDEFAAHAESLTEQVLELEQRMSISDAAKSQFDKAYQLVCKVAGEIPRSTAFEQAKVLLRDYPTQKVQAQQTSQLRAKLHELEQRYAQQQSAVRLLKEFNQRANVSLEDAEALEAYHAEQEALLEDVSAELSEQVEQRSTLRQKREQLSALYQDNAKKAPAWLTAQAALERLQDQSGETFADSQDVMQFMQAQLVKERELTIERDQLEQQRQQLEAQISRLSQPDGSEDARLNVLAERFGGVLLSELYDDVPIEDAPYFSALYGPARHAIVVRDLDAVKGQLAQLEECPDDLYLIEGDPTAFDDSVLSAQELAHGVVVQVSDRELRYSKFPEIPLFGRAAREQYLEALQQQRDDVTEQHAQRAFDVQKCQRLHEHFSQFVGLHLALAFQPNPEDVMAEIQQQRNEIERELNQFVTTEQQLRIQLDYAKEKMQLLNKLIPQLNLIADESLIDRVEECREQLDIAEQDELFIRQYGATLSQLEPIANTLQSDPEHYERLKADYEQAISQQKQVQQRLFALADVLQRKAHFAYEERVQTENTDLNEQLRAKLDSLQQQREVQKAQLQQKQQQFTNYNRVYIELQTSFNNKMQMLQELLQEVGELGVRADQGAEERAKQRRDELHQVLSDTRQRRHYVEKQLTLIESEAQSLNARIRKAERDYKTQRELVVAAKVSWCVVMRLSRGSDVEKRLNRREFAYLSADELRSMSDKALGALRTAVADNEYLRDSLRLSEDNRKPENKVRFFIAVYQHLRERIRQDIIKTDDPIDAIEQMEIELSRLTDELTRREQKLAISSESVANIMRKTIQREQNRIRMLNQGLQNIAFGQVKSVRLVVNIRDTHAMLLDALSGTQEEYQDLFTDQRMTFSEAIAKLYQRLNPHIDMGQRTAQTIGEELLDYRNYLDLEVEVYRGADGWLRAESGALSTGEAIGTGMSILLMVVQSWEEESRRIRGKDIVPCRLLFLDEAARLDAKSISTLFELCERLDMQLLIAAPENISPEKGTTYKLVRKIAGNQEHVHVVGLRGFGATA.

60-67 (GGNGAGKS) is an ATP binding site. Coiled-coil stretches lie at residues 322–693 (RART…SQPD), 861–1140 (EDVM…AKVS), and 1233–1289 (IDAI…LQNI). The tract at residues 692–809 (PDGSEDARLN…EIPLFGRAAR (118 aa)) is flexible hinge.

It belongs to the SMC family. MukB subfamily. As to quaternary structure, homodimerization via its hinge domain. Binds to DNA via its C-terminal region. Interacts, and probably forms a ternary complex, with MukE and MukF via its C-terminal region. The complex formation is stimulated by calcium or magnesium. Interacts with tubulin-related protein FtsZ.

Its subcellular location is the cytoplasm. It localises to the nucleoid. In terms of biological role, plays a central role in chromosome condensation, segregation and cell cycle progression. Functions as a homodimer, which is essential for chromosome partition. Involved in negative DNA supercoiling in vivo, and by this means organize and compact chromosomes. May achieve or facilitate chromosome segregation by condensation DNA from both sides of a centrally located replisome during cell division. The protein is Chromosome partition protein MukB of Pasteurella multocida (strain Pm70).